Here is a 1144-residue protein sequence, read N- to C-terminus: ATP-dependent helicase/deoxyribonuclease subunit B (1144 aa).

In terms of domain architecture, UvrD-like helicase ATP-binding spans 1–276; sequence MAIRYVFGRA…IDLDRNERPV (276 aa). Residue 8 to 15 coordinates ATP; that stretch reads GRAGRGKS. A UvrD-like helicase C-terminal domain is found at 274-584; the sequence is RPVLPKVQEI…LVGSIERSKS (311 aa). [4Fe-4S] cluster-binding residues include cysteine 784, cysteine 1102, cysteine 1105, and cysteine 1111.

This sequence belongs to the helicase family. AddB/RexB type 1 subfamily. In terms of assembly, heterodimer of AddA and AddB. Requires Mg(2+) as cofactor. [4Fe-4S] cluster serves as cofactor.

Functionally, the heterodimer acts as both an ATP-dependent DNA helicase and an ATP-dependent, dual-direction single-stranded exonuclease. Recognizes the chi site generating a DNA molecule suitable for the initiation of homologous recombination. The AddB subunit has 5' -&gt; 3' nuclease activity but not helicase activity. The sequence is that of ATP-dependent helicase/deoxyribonuclease subunit B from Alkaliphilus oremlandii (strain OhILAs) (Clostridium oremlandii (strain OhILAs)).